The following is a 353-amino-acid chain: Chorismate synthase (353 aa).

Arg-48 provides a ligand contact to NADP(+). FMN is bound by residues 128–130 (RAS), Gly-280, 295–299 (KPIPS), and Arg-321.

Belongs to the chorismate synthase family. In terms of assembly, homotetramer. Requires FMNH2 as cofactor.

The enzyme catalyses 5-O-(1-carboxyvinyl)-3-phosphoshikimate = chorismate + phosphate. It participates in metabolic intermediate biosynthesis; chorismate biosynthesis; chorismate from D-erythrose 4-phosphate and phosphoenolpyruvate: step 7/7. Its function is as follows. Catalyzes the anti-1,4-elimination of the C-3 phosphate and the C-6 proR hydrogen from 5-enolpyruvylshikimate-3-phosphate (EPSP) to yield chorismate, which is the branch point compound that serves as the starting substrate for the three terminal pathways of aromatic amino acid biosynthesis. This reaction introduces a second double bond into the aromatic ring system. The protein is Chorismate synthase of Nitratidesulfovibrio vulgaris (strain DSM 19637 / Miyazaki F) (Desulfovibrio vulgaris).